Consider the following 187-residue polypeptide: Accessory gene regulator protein B (187 aa).

5 helical membrane passes run 49-69, 82-102, 106-126, 144-164, and 166-186; these read ISIF…YMLI, ILCY…LINI, FTYL…YAPA, LSII…PFYA, and FMLL…FPKE.

The protein belongs to the AgrB family.

It localises to the cell membrane. Essential for the production of a quorum sensing system signal molecule, the autoinducing peptide (AIP). This quorum sensing system is responsible for the regulation of the expression of virulence factor genes. Involved in the proteolytic processing of AgrD, the precursor of AIP. The chain is Accessory gene regulator protein B from Staphylococcus aureus (strain Mu50 / ATCC 700699).